The sequence spans 251 residues: Imidazole glycerol phosphate synthase subunit HisF (251 aa).

Active-site residues include Asp-12 and Asp-131.

The protein belongs to the HisA/HisF family. As to quaternary structure, heterodimer of HisH and HisF.

The protein resides in the cytoplasm. It catalyses the reaction 5-[(5-phospho-1-deoxy-D-ribulos-1-ylimino)methylamino]-1-(5-phospho-beta-D-ribosyl)imidazole-4-carboxamide + L-glutamine = D-erythro-1-(imidazol-4-yl)glycerol 3-phosphate + 5-amino-1-(5-phospho-beta-D-ribosyl)imidazole-4-carboxamide + L-glutamate + H(+). The protein operates within amino-acid biosynthesis; L-histidine biosynthesis; L-histidine from 5-phospho-alpha-D-ribose 1-diphosphate: step 5/9. Its function is as follows. IGPS catalyzes the conversion of PRFAR and glutamine to IGP, AICAR and glutamate. The HisF subunit catalyzes the cyclization activity that produces IGP and AICAR from PRFAR using the ammonia provided by the HisH subunit. The sequence is that of Imidazole glycerol phosphate synthase subunit HisF from Streptomyces avermitilis (strain ATCC 31267 / DSM 46492 / JCM 5070 / NBRC 14893 / NCIMB 12804 / NRRL 8165 / MA-4680).